Here is a 118-residue protein sequence, read N- to C-terminus: Large ribosomal subunit protein uL18 (118 aa).

Belongs to the universal ribosomal protein uL18 family. In terms of assembly, part of the 50S ribosomal subunit; part of the 5S rRNA/L5/L18/L25 subcomplex. Contacts the 5S and 23S rRNAs.

Its function is as follows. This is one of the proteins that bind and probably mediate the attachment of the 5S RNA into the large ribosomal subunit, where it forms part of the central protuberance. The polypeptide is Large ribosomal subunit protein uL18 (Campylobacter lari (strain RM2100 / D67 / ATCC BAA-1060)).